The primary structure comprises 189 residues: GTPase HRas (189 aa).

10–17 is a GTP binding site; it reads GAKGVGKS. The short motif at 32 to 40 is the Effector region element; that stretch reads YDPTIEDSY. GTP is bound by residues 57-61 and 116-119; these read DTAGQ and NKCD. S-palmitoyl cysteine; by host attachment occurs at residues C181 and C184. The residue at position 186 (C186) is a Cysteine methyl ester; by host. C186 carries the S-farnesyl cysteine; by host lipid modification. Residues 187–189 constitute a propeptide, removed in mature form; the sequence is VLS.

The protein belongs to the small GTPase superfamily. Ras family.

Its subcellular location is the host cell membrane. It carries out the reaction GTP + H2O = GDP + phosphate + H(+). Its activity is regulated as follows. Alternates between an inactive form bound to GDP and an active form bound to GTP. Activated by a guanine nucleotide-exchange factor (GEF) and inactivated by a GTPase-activating protein (GAP). This is GTPase HRas (H-RAS) from Moloney murine sarcoma virus (MoMSV).